Here is a 38-residue protein sequence, read N- to C-terminus: Large ribosomal subunit protein bL36 (38 aa).

Belongs to the bacterial ribosomal protein bL36 family.

The polypeptide is Large ribosomal subunit protein bL36 (Acholeplasma laidlawii (strain PG-8A)).